Here is a 201-residue protein sequence, read N- to C-terminus: UPF0098 protein MT1961 (201 aa).

The segment at 125–146 (TADGETPGGGISLPNSSGQPAY) is disordered.

The protein belongs to the UPF0098 family.

The protein is UPF0098 protein MT1961 of Mycobacterium tuberculosis (strain CDC 1551 / Oshkosh).